We begin with the raw amino-acid sequence, 78 residues long: RNA-binding protein Hfq (78 aa).

The 61-residue stretch at 9 to 69 (DHFLNQLRKE…ISTFAPQRNV (61 aa)) folds into the Sm domain.

The protein belongs to the Hfq family. As to quaternary structure, homohexamer.

In terms of biological role, RNA chaperone that binds small regulatory RNA (sRNAs) and mRNAs to facilitate mRNA translational regulation in response to envelope stress, environmental stress and changes in metabolite concentrations. Also binds with high specificity to tRNAs. The polypeptide is RNA-binding protein Hfq (Halalkalibacterium halodurans (strain ATCC BAA-125 / DSM 18197 / FERM 7344 / JCM 9153 / C-125) (Bacillus halodurans)).